A 105-amino-acid chain; its full sequence is Heat shock protein HspQ (105 aa).

The protein belongs to the HspQ family.

It is found in the cytoplasm. In terms of biological role, involved in the degradation of certain denaturated proteins, including DnaA, during heat shock stress. The protein is Heat shock protein HspQ of Sodalis glossinidius (strain morsitans).